A 343-amino-acid polypeptide reads, in one-letter code: Methionine import ATP-binding protein MetN (343 aa).

The ABC transporter domain occupies 2–241 (IKLSNITKVF…PKTPLAQKFI (240 aa)). 38–45 (GASGAGKS) provides a ligand contact to ATP.

Belongs to the ABC transporter superfamily. Methionine importer (TC 3.A.1.24) family. In terms of assembly, the complex is composed of two ATP-binding proteins (MetN), two transmembrane proteins (MetI) and a solute-binding protein (MetQ).

It is found in the cell inner membrane. The enzyme catalyses L-methionine(out) + ATP + H2O = L-methionine(in) + ADP + phosphate + H(+). It carries out the reaction D-methionine(out) + ATP + H2O = D-methionine(in) + ADP + phosphate + H(+). Functionally, part of the ABC transporter complex MetNIQ involved in methionine import. Responsible for energy coupling to the transport system. This is Methionine import ATP-binding protein MetN from Escherichia coli O157:H7.